A 468-amino-acid chain; its full sequence is E3 ubiquitin-protein ligase RGLG2 (468 aa).

A disordered region spans residues 1–89 (MGTGNSKENW…PSQSYGSDNK (89 aa)). Gly-2 carries N-myristoyl glycine lipidation. The segment covering 12-45 (QSSFRSTSASSASPSSSSWASQQSYPQYGAESYN) has biased composition (low complexity). Positions 46–65 (YPPPPSYAQPPEYTQPPPPL) are enriched in pro residues. A compositionally biased stretch (low complexity) spans 66-84 (YSTQPYSAPSYSAPPSQSY). In terms of domain architecture, VWFA spans 122–342 (NLIVGIDFTK…KETEFALSAL (221 aa)). Residues 369-416 (FPLPPPMRGGSSSYNSPKPSRLPSFKPSVPPHPTEGYHVRSSPVPPPT) form a disordered region. The segment at 425–458 (CPICLSNPKDMAFGCGHQTCCECGPDLQMCPICR) adopts an RING-type zinc-finger fold.

Interacts with the heterodimer UBC35/UEV1B, UBC35 alone, PIN1, but not with UCB2, UCB9, UEV1B or UEV1C alone. Interacts with ERF053. N-myristoylated. Ubiquitously expressed.

The protein resides in the cell membrane. The protein localises to the nucleus. The catalysed reaction is S-ubiquitinyl-[E2 ubiquitin-conjugating enzyme]-L-cysteine + [acceptor protein]-L-lysine = [E2 ubiquitin-conjugating enzyme]-L-cysteine + N(6)-ubiquitinyl-[acceptor protein]-L-lysine.. Its function is as follows. E3 ubiquitin-protein ligase that mediates the formation of 'Lys-63'-linked ubiquitin chains. Regulates apical dominance by acting on the auxin transport proteins abundance. Mediates ubiquitination and subsequent proteasomal degradation of ERF053 in response to drought stress. Acts as a negative regulator of drought stress response. In Arabidopsis thaliana (Mouse-ear cress), this protein is E3 ubiquitin-protein ligase RGLG2.